We begin with the raw amino-acid sequence, 337 residues long: MPLQLAKSLKLHNDKVWSIDFEPVRGLLATGSTDRAIKVLQLKNGKENLLDVLDDTVHKKAVRSVAWRPHSDLLAAGSFDSTISIWTQSDLDLEEGAKLEMELLAIIEGHENEVKGISWSQDGCLLATCSRDKSVWIWETDEAGEEYECISVLQEHSQDVKHVVWHTKHNLLASSSYDDTVRIWKDYDDDWECAAVLTGHEGTIWCSDFSKEEDPIRLCSGSDDSTVRVWKYIGDDEDDQQEWVCESTLPNAHRSQIYGVAWSPSGRIASVGADGVLAVYKEKQNDSEVSEWEISATYKAAHTVYEINTVKWVNIDGKEMLITAGDDGRVNLWNYQD.

7 WD repeats span residues 11 to 50 (LHND…ENLL), 57 to 96 (VHKK…LEEG), 109 to 148 (GHEN…EEYE), 155 to 194 (EHSQ…WECA), 199 to 240 (GHEG…EDDQ), 252 to 290 (AHRS…SEVS), and 301 to 337 (AHTV…NYQD).

The protein belongs to the WD repeat CIA1 family. Interacts with NAR1.

Its subcellular location is the cytoplasm. The protein localises to the nucleus. Its function is as follows. Essential component of the cytosolic iron-sulfur (Fe/S) protein assembly machinery. Required for the maturation of extramitochondrial Fe/S proteins. This chain is Probable cytosolic iron-sulfur protein assembly protein 1, found in Candida glabrata (strain ATCC 2001 / BCRC 20586 / JCM 3761 / NBRC 0622 / NRRL Y-65 / CBS 138) (Yeast).